A 261-amino-acid chain; its full sequence is Neurexophilin-2 (261 aa).

The signal sequence occupies residues 1 to 22 (MSLRPLPLLVVPGLLQLLFCDS). The II stretch occupies residues 23-87 (EEVIHNTESV…WDWLANITEI (65 aa)). N-linked (GlcNAc...) asparagine glycosylation is found at N83, N136, N146, and N152. The tract at residues 88–166 (QEQLARTKRR…LVPPSKVVEF (79 aa)) is III. An IV (linker domain) region spans residues 167–175 (EISPQSTLE). A v (Cys-rich) region spans residues 176–261 (TKESKSFNCH…HSETPYLSFG (86 aa)).

This sequence belongs to the neurexophilin family. In terms of processing, may be proteolytically processed at the boundary between the N-terminal non-conserved and the central conserved domain in neuron-like cells.

The protein resides in the secreted. In terms of biological role, may be signaling molecules that resemble neuropeptides and that act by binding to alpha-neurexins and possibly other receptors. This chain is Neurexophilin-2 (Nxph2), found in Mus musculus (Mouse).